Here is a 342-residue protein sequence, read N- to C-terminus: Phosphate acyltransferase (342 aa).

This sequence belongs to the PlsX family. Homodimer. Probably interacts with PlsY.

Its subcellular location is the cytoplasm. The catalysed reaction is a fatty acyl-[ACP] + phosphate = an acyl phosphate + holo-[ACP]. Its pathway is lipid metabolism; phospholipid metabolism. Catalyzes the reversible formation of acyl-phosphate (acyl-PO(4)) from acyl-[acyl-carrier-protein] (acyl-ACP). This enzyme utilizes acyl-ACP as fatty acyl donor, but not acyl-CoA. The protein is Phosphate acyltransferase of Trichormus variabilis (strain ATCC 29413 / PCC 7937) (Anabaena variabilis).